An 824-amino-acid chain; its full sequence is Intraflagellar transport protein 88 homolog (824 aa).

Disordered regions lie at residues 1 to 27 and 111 to 134; these read MENV…PAYD and AFDP…DSPE. 11 TPR repeats span residues 196-229, 232-265, 271-304, 415-448, 450-483, 484-517, 518-551, 552-585, 586-619, 620-653, and 654-687; these read YSVL…KMFS, GRLK…IPSV, IKIM…APSL, NDLE…DSRV, SAAA…DRYN, PSAL…DSSC, TEAL…LRNS, AQVL…VPTD, SQAL…FPSN, IEVI…QPTQ, and VKWQ…FPEN. A compositionally biased stretch (basic and acidic residues) spans 721–731; the sequence is EMREQRIKSGR. The disordered stretch occupies residues 721–824; it reads EMREQRIKSG…EELGDDLLPE (104 aa). Positions 748–757 are enriched in polar residues; that stretch reads DSGQNNSASS. A compositionally biased stretch (basic and acidic residues) spans 797–808; that stretch reads ERPKTAAKKRID. Acidic residues predominate over residues 809 to 824; that stretch reads EDDFADEELGDDLLPE.

In terms of assembly, component of the IFT complex B, at least composed of IFT20, IFT22, IFT25, IFT27, IFT46, IFT52, TRAF3IP1/IFT54, IFT57, IFT74, IFT80, IFT81, and IFT88. Interacts with IFT20, IFT22, IFT25, IFT27, IFT52, TRAF3IP1, IFT74, IFT80 and IFT81. Interacts with IFT172. Interacts with IFT57. Interacts with IFT46. Interacts with IFT70B. Interacts with C2CD3. Interacts with ENTR1 (via N-terminus). Interacts with LRRC56. Interacts with DZIP1. Interacts with CCDC38. Interacts with CCDC146. Interacts with CFAP53. Testis.

The protein resides in the cytoplasm. Its subcellular location is the cytoskeleton. The protein localises to the microtubule organizing center. It localises to the centrosome. It is found in the centriole. The protein resides in the cilium basal body. Its subcellular location is the cell projection. The protein localises to the cilium. It localises to the flagellum. Its function is as follows. Positively regulates primary cilium biogenesis. Also involved in autophagy since it is required for trafficking of ATG16L and the expansion of the autophagic compartment. The sequence is that of Intraflagellar transport protein 88 homolog (Ift88) from Mus musculus (Mouse).